The chain runs to 723 residues: Transcription factor E2F7 (723 aa).

The interval 121–146 (AEEEEEEELDDSCQYEALDESERRPS) is disordered. The segment covering 122–139 (EEEEEEELDDSCQYEALD) has biased composition (acidic residues). DNA-binding regions lie at residues 147-216 (RKQK…VWHG) and 264-349 (RKDK…KWIG). Polar residues-rich tracts occupy residues 356 to 370 (SSNS…SNSG) and 395 to 405 (LISSAPSTPHR). Disordered regions lie at residues 356-379 (SSNS…KMAR), 395-417 (LISS…YSRK), 489-546 (SLRK…ASFG), 650-689 (EHHG…SKSF), and 702-723 (QSAA…TAAN). Residues 494-503 (ERSEEDDHQT) are compositionally biased toward basic and acidic residues. The span at 520 to 535 (SESLSSSTRRSPVCSP) shows a compositional bias: low complexity.

This sequence belongs to the E2F/DP family. Homodimer and heterodimer: mainly forms homodimers and, to a lesser extent, heterodimers with e2f8.

It localises to the nucleus. Its function is as follows. Atypical E2F transcription factor that participates in various processes such as angiogenesis and polyploidization of specialized cells. Mainly acts as a transcription repressor that binds DNA independently of DP proteins and specifically recognizes the E2 recognition site 5'-TTTC[CG]CGC-3'. Directly represses transcription of classical E2F transcription factors such as e2f1. Acts as a regulator of S-phase by recognizing and binding the E2-related site 5'-TTCCCGCC-3' and mediating repression of G1/S-regulated genes. Acts as a promoter of sprouting angiogenesis, possibly by acting as a transcription activator and promoting expression of vegfa. The protein is Transcription factor E2F7 (e2f7) of Danio rerio (Zebrafish).